We begin with the raw amino-acid sequence, 165 residues long: Deoxyuridine 5'-triphosphate nucleotidohydrolase (165 aa).

Belongs to the dUTPase family. In terms of assembly, homotrimer. Requires Mg(2+) as cofactor.

It is found in the host cytoplasm. It localises to the virion. It carries out the reaction dUTP + H2O = dUMP + diphosphate + H(+). The viral dUTPase may play a role in lowering the dUTP concentration in natural infections to minimize misincorporation of deoxyuridine into the viral DNA and ensure the fidelity of genome replication. The chain is Deoxyuridine 5'-triphosphate nucleotidohydrolase from African swine fever virus (isolate Tick/South Africa/Pretoriuskop Pr4/1996) (ASFV).